Reading from the N-terminus, the 103-residue chain is Integration host factor subunit beta (103 aa).

The disordered stretch occupies residues 62 to 81 (RNPKTGESVALPGKHVPHFK).

It belongs to the bacterial histone-like protein family. In terms of assembly, heterodimer of an alpha and a beta chain.

Functionally, this protein is one of the two subunits of integration host factor, a specific DNA-binding protein that functions in genetic recombination as well as in transcriptional and translational control. In Xanthomonas campestris pv. campestris (strain B100), this protein is Integration host factor subunit beta.